The following is a 224-amino-acid chain: MKINLERLCRRLNYHFNNIAYLKQALTHCSAGSDNYERFEFLGDSILSFVIANELFNRFPLHSEGQLSRLRSFLVKGEMLAEIAREIDLGDYLFLGQGELRSGGFRRTSILADALEAILAAIYLDGGMIAAKQIILMLYSSRLDDPDLNHCLKDAKTQLQEFLQASKFALPEYVLTKIEGDEHAQIFHVTCTIEGVSQVAYGTGPNRRKAEQLAAKAMLEQLQG.

An RNase III domain is found at 5–127 (LERLCRRLNY…ILAAIYLDGG (123 aa)). Glutamate 40 contacts Mg(2+). The active site involves aspartate 44. Aspartate 113 and glutamate 116 together coordinate Mg(2+). Glutamate 116 is a catalytic residue. Residues 154-224 (DAKTQLQEFL…AKAMLEQLQG (71 aa)) form the DRBM domain.

It belongs to the ribonuclease III family. In terms of assembly, homodimer. Mg(2+) is required as a cofactor.

Its subcellular location is the cytoplasm. It carries out the reaction Endonucleolytic cleavage to 5'-phosphomonoester.. Its function is as follows. Digests double-stranded RNA. Involved in the processing of primary rRNA transcript to yield the immediate precursors to the large and small rRNAs (23S and 16S). Processes some mRNAs, and tRNAs when they are encoded in the rRNA operon. Processes pre-crRNA and tracrRNA of type II CRISPR loci if present in the organism. This is Ribonuclease 3 from Legionella pneumophila subsp. pneumophila (strain Philadelphia 1 / ATCC 33152 / DSM 7513).